Consider the following 94-residue polypeptide: Small ribosomal subunit protein bS6 (94 aa).

The protein belongs to the bacterial ribosomal protein bS6 family.

In terms of biological role, binds together with bS18 to 16S ribosomal RNA. This is Small ribosomal subunit protein bS6 from Alkaliphilus metalliredigens (strain QYMF).